The primary structure comprises 851 residues: MAAATEENMSVAALVMSVPDNIGRSPEVEGGGAAGEEKDAATKGTVAVGDSEEDGEDVFEVERILDMKCEGGKNLYKVRWKGYTSDDDTWEPEVHLEDCKEVLLEFRKKVAENKAKAVRKDIQKLSLNNDIFEADSDIDQQGDTKEDTSPRKKKKKIKYKEDKSPDDLRKKRAKMGKLKDKFKTELESTSEILGFDVKTKKRILEVKEELKDSKKPKKDEIKETKKTKRADIRDLKIKIREDVKDNRKTKKERYIDSPLESESPNDSFTLEDESEDFLSDNKEKQNVRTAKDKTGQDTVQESIFEKHLDDLISIEEAGTRVRRKKKQPRKFEEPKEIKKLENTNNFLERKMIPKKQRNQDKGRSNPELSKLPSPVFAQTMKSLRLSGEEKGLKSSDLAEEEKERKNEPKEKYQKRYDFDKEEKARKEPKGLKSFKEIRNAFDLFKKTAEEKNDLENNSKREEISLDYKITHDNKTKDKCSLREERNTRDETDTWAYIAAEGDQEVSDSVCQTDESSDGKQPILSLGMDLQLEWMKLEDFQKHLDGEDEPFITANRIPSNLLRDAVKNGDYIAVKVALNSNEEYNLDQEDSTGMTLVMLAAAGGQDDLLRLLITKGAKVNGRQKNGTTALIHAAEKNFLTTVAILLEAGAFVNVQQSNGETALMKACKRGNSDIVRLVIECGADCNILSKHQNSALYFAKQCNNVLVYELLKSHLETLSRVAEETIRDYFESRLALLEPVFPIACHRLCEGPDFSTDFNYMPPQNMPEGSGVLLFIFHANFLGKDVIARLCGPCSVQAVVLNDKFQLPVFLDSHFVYSFSPVAGPNKLFIRLTEAPFAKVKLLIGAYRVQLQ.

Residues asparagine 21–aspartate 54 form a disordered region. Phosphoserine occurs at positions 51, 85, and 136. The 60-residue stretch at phenylalanine 59–valine 118 folds into the Chromo domain. Residues tryptophan 80–aspartate 87 form a histone H3K9me3 binding region. The segment at glutamate 133–lysine 174 is disordered. Threonine 144 is subject to Phosphothreonine. Residues serine 149 and serine 164 each carry the phosphoserine; by CDK1 modification. Basic and acidic residues predominate over residues tyrosine 159 to arginine 169. 4 positions are modified to phosphoserine: serine 188, serine 263, serine 267, and serine 274. Residues arginine 240–serine 302 form a disordered region. The segment covering threonine 269 to leucine 278 has biased composition (acidic residues). Residues serine 279–glycine 295 show a composition bias toward basic and acidic residues. At serine 313 the chain carries Phosphoserine. The interval glutamate 315 to proline 428 is disordered. The span at arginine 329–serine 364 shows a compositional bias: basic and acidic residues. Threonine 379 is subject to Phosphothreonine; by CDK1. Phosphoserine occurs at positions 386 and 394. A compositionally biased stretch (basic and acidic residues) spans glutamate 401–proline 428. Position 447 is a phosphothreonine (threonine 447). ANK repeat units follow at residues threonine 591–glycine 620, asparagine 624–valine 653, asparagine 657–isoleucine 686, and histidine 690–arginine 719.

In terms of assembly, homodimer. Interacts (via chromo domain) with histone H3K9me3. Has the highest affinity for H3K9me3, and lesser affinity for H3K9me2 and H3K9me1. Component of the HUSH complex; at least composed of TASOR, PPHLN1 and MPHOSPH8. Interacts with DNMT3, EHMT1 and SETDB1. Interacts with MORC2; the interaction associateS MORC2 with the HUSH complex which recruits MORC2 to heterochromatic loci. Interacts with ZNF638; leading to recruitment of the HUSH complex to unintegrated retroviral DNA. Interacts with TASOR. Post-translationally, phosphorylated in M (mitotic) phase. Phosphorylation by CDK1 promotes dissociation from chromatin.

The protein localises to the nucleus. It localises to the chromosome. Heterochromatin component that specifically recognizes and binds methylated 'Lys-9' of histone H3 (H3K9me) and promotes recruitment of proteins that mediate epigenetic repression. Mediates recruitment of the HUSH complex to H3K9me3 sites: the HUSH complex is recruited to genomic loci rich in H3K9me3 and is required to maintain transcriptional silencing by promoting recruitment of SETDB1, a histone methyltransferase that mediates further deposition of H3K9me3, as well as MORC2. Binds H3K9me and promotes DNA methylation by recruiting DNMT3A to target CpG sites; these can be situated within the coding region of the gene. Mediates down-regulation of CDH1 expression. Also represses L1 retrotransposons in collaboration with MORC2 and, probably, SETDB1, the silencing is dependent of repressive epigenetic modifications, such as H3K9me3 mark. Silencing events often occur within introns of transcriptionally active genes, and lead to the down-regulation of host gene expression. The HUSH complex is also involved in the silencing of unintegrated retroviral DNA by being recruited by ZNF638: some part of the retroviral DNA formed immediately after infection remains unintegrated in the host genome and is transcriptionally repressed. The chain is M-phase phosphoprotein 8 from Rattus norvegicus (Rat).